Here is a 284-residue protein sequence, read N- to C-terminus: Aminoglycoside 6-adenylyltransferase (284 aa).

In terms of assembly, homodimer.

The protein localises to the cytoplasm. The enzyme catalyses streptomycin + ATP = 6-O-adenylylstreptomycin + diphosphate. It catalyses the reaction streptomycin + GTP = 6-O-guanylylstreptomycin + diphosphate. It carries out the reaction streptidine + ATP = 6-O-adenylylstreptidine + diphosphate. Functionally, mediates bacterial resistance to streptomycin. Adenylates streptomycin on the O-6 residue. Adenylates streptidine on the O-6 residue. Does not act on spectinomycin, neomycin-B or kanamycin. Specific for ATP and GTP nucleotides incorporating a purine ring. No reaction with CTP or UTP. This chain is Aminoglycoside 6-adenylyltransferase, found in Bacillus subtilis (strain 168).